A 191-amino-acid chain; its full sequence is Probable rho GDP-dissociation inhibitor (191 aa).

The segment at 1–22 (MSDHENTGENTSEYQYKQPPQK) is disordered. Residues 8–21 (GENTSEYQYKQPPQ) are compositionally biased toward polar residues.

It belongs to the Rho GDI family.

Its subcellular location is the cytoplasm. Functionally, regulates the GDP/GTP exchange reaction of the Rho proteins by inhibiting the dissociation of GDP from them, and the subsequent binding of GTP to them. This Caenorhabditis elegans protein is Probable rho GDP-dissociation inhibitor (rhi-1).